A 727-amino-acid chain; its full sequence is Catalase-peroxidase (727 aa).

The segment at residues 95-218 (WHSAGTYRII…LAAVQMGLIY (124 aa)) is a cross-link (tryptophyl-tyrosyl-methioninium (Trp-Tyr) (with M-244)). H96 (proton acceptor) is an active-site residue. The tryptophyl-tyrosyl-methioninium (Tyr-Met) (with W-95) cross-link spans 218–244 (YVNPEGPNGEPDVLGAAKDIKESFGKM). H259 serves as a coordination point for heme b.

This sequence belongs to the peroxidase family. Peroxidase/catalase subfamily. In terms of assembly, homodimer or homotetramer. The cofactor is heme b. In terms of processing, formation of the three residue Trp-Tyr-Met cross-link is important for the catalase, but not the peroxidase activity of the enzyme.

It carries out the reaction H2O2 + AH2 = A + 2 H2O. It catalyses the reaction 2 H2O2 = O2 + 2 H2O. Functionally, bifunctional enzyme with both catalase and broad-spectrum peroxidase activity. The sequence is that of Catalase-peroxidase from Persephonella marina (strain DSM 14350 / EX-H1).